A 443-amino-acid polypeptide reads, in one-letter code: Ribosomal protein uS12 methylthiotransferase RimO (443 aa).

Positions 9-119 (PKIGMVSLGC…VVSAVHDAAP (111 aa)) constitute an MTTase N-terminal domain. [4Fe-4S] cluster is bound by residues cysteine 18, cysteine 54, cysteine 83, cysteine 150, cysteine 154, and cysteine 157. Residues 136 to 373 (LTPRHYSYLK…MEKAAQISEA (238 aa)) enclose the Radical SAM core domain. The TRAM domain occupies 376–443 (QAKIGRDIAT…EHDLFGVALS (68 aa)).

This sequence belongs to the methylthiotransferase family. RimO subfamily. The cofactor is [4Fe-4S] cluster.

It localises to the cytoplasm. The catalysed reaction is L-aspartate(89)-[ribosomal protein uS12]-hydrogen + (sulfur carrier)-SH + AH2 + 2 S-adenosyl-L-methionine = 3-methylsulfanyl-L-aspartate(89)-[ribosomal protein uS12]-hydrogen + (sulfur carrier)-H + 5'-deoxyadenosine + L-methionine + A + S-adenosyl-L-homocysteine + 2 H(+). In terms of biological role, catalyzes the methylthiolation of an aspartic acid residue of ribosomal protein uS12. This is Ribosomal protein uS12 methylthiotransferase RimO from Zymomonas mobilis subsp. mobilis (strain ATCC 31821 / ZM4 / CP4).